A 693-amino-acid chain; its full sequence is Transcription activator of gluconeogenesis BC1G_14637 (693 aa).

Residues 1–12 (MSGETEIDDPEV) show a composition bias toward acidic residues. A disordered region spans residues 1–75 (MSGETEIDDP…KFDPKDPLRP (75 aa)). Positions 21–49 (YSDHEQELDVIGKEGDNQEMAEQKVRPDG) are enriched in basic and acidic residues. Polar residues predominate over residues 52–62 (NGNTVGATATV). The segment covering 65–74 (PKFDPKDPLR) has biased composition (basic and acidic residues). Positions 84–112 (CFACQRAHLTCGDERPCQRCIKRGLADAC) form a DNA-binding region, zn(2)-C6 fungal-type. Composition is skewed to polar residues over residues 144–155 (SSNRATAASTPT) and 275–287 (SAET…SAGM). 4 disordered regions span residues 144-170 (SSNR…QPDT), 273-299 (SGSA…FSNN), 350-413 (TSGS…RNRD), and 531-567 (NLNT…DSNP). The segment covering 356-367 (SPSTDASPAAST) has biased composition (low complexity). The segment covering 369–379 (GFESSPTTTNY) has biased composition (polar residues). The segment covering 394-408 (KSGPSGKLGPSGILG) has biased composition (low complexity).

It belongs to the ERT1/acuK family.

The protein localises to the nucleus. Functionally, transcription factor which regulates nonfermentable carbon utilization. Activator of gluconeogenetic genes. The chain is Transcription activator of gluconeogenesis BC1G_14637 from Botryotinia fuckeliana (strain B05.10) (Noble rot fungus).